The following is a 213-amino-acid chain: Orotate phosphoribosyltransferase (213 aa).

Residue K26 participates in 5-phospho-alpha-D-ribose 1-diphosphate binding. Position 34–35 (34–35) interacts with orotate; the sequence is FF. 5-phospho-alpha-D-ribose 1-diphosphate contacts are provided by residues 72 to 73, R99, K100, K103, H105, and 124 to 132; these read YK and DDVITAGTA. Orotate is bound by residues T128 and R156.

Belongs to the purine/pyrimidine phosphoribosyltransferase family. PyrE subfamily. As to quaternary structure, homodimer. The cofactor is Mg(2+).

The enzyme catalyses orotidine 5'-phosphate + diphosphate = orotate + 5-phospho-alpha-D-ribose 1-diphosphate. The protein operates within pyrimidine metabolism; UMP biosynthesis via de novo pathway; UMP from orotate: step 1/2. Catalyzes the transfer of a ribosyl phosphate group from 5-phosphoribose 1-diphosphate to orotate, leading to the formation of orotidine monophosphate (OMP). In Vibrio vulnificus (strain CMCP6), this protein is Orotate phosphoribosyltransferase.